Here is a 666-residue protein sequence, read N- to C-terminus: Translation factor guf1, mitochondrial (666 aa).

Residues 1–43 (MRGCLQLARWLRAAPKCPAASLLKPPSGLANPARFFTTSTACW) constitute a mitochondrion transit peptide. The tr-type G domain maps to 68-248 (DRYRNFCIVA…TVVEKIPAPV (181 aa)). Residues 77-84 (AHVDHGKS), 141-145 (DTPGH), and 195-198 (NKVD) contribute to the GTP site.

It belongs to the TRAFAC class translation factor GTPase superfamily. Classic translation factor GTPase family. LepA subfamily.

The protein localises to the mitochondrion inner membrane. The enzyme catalyses GTP + H2O = GDP + phosphate + H(+). Its function is as follows. Promotes mitochondrial protein synthesis. May act as a fidelity factor of the translation reaction, by catalyzing a one-codon backward translocation of tRNAs on improperly translocated ribosomes. Binds to mitochondrial ribosomes in a GTP-dependent manner. The sequence is that of Translation factor guf1, mitochondrial (guf1) from Aspergillus niger (strain ATCC MYA-4892 / CBS 513.88 / FGSC A1513).